The primary structure comprises 518 residues: Lysine--tRNA ligase (518 aa).

Mg(2+)-binding residues include Glu-407 and Glu-414.

It belongs to the class-II aminoacyl-tRNA synthetase family. In terms of assembly, homodimer. Mg(2+) is required as a cofactor.

The protein localises to the cytoplasm. The enzyme catalyses tRNA(Lys) + L-lysine + ATP = L-lysyl-tRNA(Lys) + AMP + diphosphate. This Helicobacter hepaticus (strain ATCC 51449 / 3B1) protein is Lysine--tRNA ligase.